Consider the following 1785-residue polypeptide: BCL-6 corepressor-like protein 1 (1785 aa).

Disordered stretches follow at residues 65 to 101, 113 to 137, and 343 to 368; these read VGSGSNARGADPDGSATEKLGHKSEDKPDDPQPKMDY, VPLSSPGDGLKLPASDSAEASNSRA, and ASTPPAAPAPPSVPMPTPTPSSGPPS. Residues 83 to 97 are compositionally biased toward basic and acidic residues; the sequence is KLGHKSEDKPDDPQP. The residue at position 496 (Ser496) is a Phosphoserine. Composition is skewed to polar residues over residues 527 to 539 and 586 to 600; these read PCTSPSGSTTTQP and GTEQQTEGTSVTFSP. 2 disordered regions span residues 527–550 and 562–646; these read PCTSPSGSTTTQPAPDGVPGPLAD and PTPQ…PMPV. Residues Ser599 and Ser613 each carry the phosphoserine modification. Lys747 participates in a covalent cross-link: Glycyl lysine isopeptide (Lys-Gly) (interchain with G-Cter in SUMO2). 3 disordered regions span residues 753 to 781, 876 to 901, and 937 to 977; these read IIDQGEPKGTGATCGKKGSQAGAEGQPST, SSSEAVHGLPEGQPRPGGSFVPEQDP, and VQPS…LKLA. Phosphoserine occurs at positions 1029 and 1033. Lys1092 participates in a covalent cross-link: Glycyl lysine isopeptide (Lys-Gly) (interchain with G-Cter in SUMO2). Disordered stretches follow at residues 1107–1293 and 1312–1487; these read PDDV…QGRR and WDTN…PEAR. A Phosphoserine modification is found at Ser1162. Positions 1176–1185 are enriched in basic residues; that stretch reads VRGKHKHRKP. Basic and acidic residues predominate over residues 1195–1213; sequence KRADSHEEGSLEKKAKSSF. A compositionally biased stretch (polar residues) spans 1222-1234; the sequence is STRTRSQSGSICS. Basic and acidic residues predominate over residues 1271-1284; sequence TQRDTQYRSHHAQD. A compositionally biased stretch (acidic residues) spans 1314–1324; it reads TNEEEEEEEEE. The Nuclear localization signal motif lies at 1328–1336; the sequence is KRKKRRRQK. Positions 1328–1339 are enriched in basic residues; that stretch reads KRKKRRRQKSRK. Residues 1352–1363 show a composition bias toward basic and acidic residues; that stretch reads EQRRKGRADLKA. The segment covering 1440 to 1449 has biased composition (polar residues); sequence WSQQKTRSPK. Residues 1461–1480 show a composition bias toward low complexity; that stretch reads TPSKSRSASSEEASESPTAR. Residue Ser1476 is modified to Phosphoserine. ANK repeat units lie at residues 1529–1558, 1562–1591, and 1595–1623; these read AGYTALHEACSRGWTDILNILLEHGANVNC, DGTRPVHDAVVNDNLETIWLLLSYGADPTL, and SGQTAMKLASSDTMKRFLSDHLSDLQGRA. Residues 1668 to 1785 form a PCGF Ub-like fold domain (PUFD); required for the interaction with the KDM2B-SKP1 heterodimeric complex region; it reads DDFMFELSDK…SEVEFQSCNS (118 aa).

It belongs to the BCOR family. As to quaternary structure, interacts with PCGF1, forming heterodimers. The PCGF1-BCORL1 heterodimeric complex interacts with the KDM2B-SKP1 heterodimeric complex to form a homotetrameric polycomb repression complex 1 (PRC1.1). Interacts with SKP1. Interacts with CTBP1, HDAC4, HDAC5 and HDAC7. In terms of tissue distribution, detected in testis and prostate. Detected at lower levels in peripheral blood leukocytes and spleen. Mainly expressed in the spermatogonia and primary spermatocytes.

The protein localises to the nucleus. Transcriptional corepressor. May specifically inhibit gene expression when recruited to promoter regions by sequence-specific DNA-binding proteins such as BCL6. This repression may be mediated at least in part by histone deacetylase activities which can associate with this corepressor. The protein is BCL-6 corepressor-like protein 1 of Homo sapiens (Human).